Consider the following 359-residue polypeptide: snRNA-activating protein complex subunit 2 (359 aa).

Positions 1-11 are enriched in basic residues; that stretch reads MKPPQRRRRVP. Disordered stretches follow at residues 1-22, 157-221, and 291-327; these read MKPP…TGPT, NQDG…GSST, and TALP…SEPI.

As to quaternary structure, part of the SNAPc complex composed of 5 subunits: SNAPC1, SNAPC2, SNAPC3, SNAPC4 and SNAPC5. SNAPC2 interacts with TBP and SNAPC4.

It is found in the nucleus. Functionally, part of the SNAPc complex required for the transcription of both RNA polymerase II and III small-nuclear RNA genes. Binds to the proximal sequence element (PSE), a non-TATA-box basal promoter element common to these 2 types of genes. Recruits TBP and BRF2 to the U6 snRNA TATA box. The sequence is that of snRNA-activating protein complex subunit 2 (Snapc2) from Mus musculus (Mouse).